Reading from the N-terminus, the 161-residue chain is uncharacterized protein (161 aa).

This is an uncharacterized protein from Homo sapiens (Human).